A 199-amino-acid polypeptide reads, in one-letter code: 5'-deoxynucleotidase YfbR (199 aa).

Residues 18–19 (RW) and histidine 33 contribute to the substrate site. Residues 30–142 (VSEHSLQVAM…VKQADALCAY (113 aa)) enclose the HD domain. A divalent metal cation is bound by residues histidine 33, histidine 68, and aspartate 69. Residues aspartate 69, 77–80 (DLPT), and aspartate 137 contribute to the substrate site. An a divalent metal cation-binding site is contributed by aspartate 137.

It belongs to the 5DNU family. Homodimer. A divalent metal cation serves as cofactor.

The protein localises to the cytoplasm. The catalysed reaction is a 2'-deoxyribonucleoside 5'-phosphate + H2O = a 2'-deoxyribonucleoside + phosphate. Its function is as follows. Catalyzes the strictly specific dephosphorylation of 2'-deoxyribonucleoside 5'-monophosphates. The polypeptide is 5'-deoxynucleotidase YfbR (Salmonella arizonae (strain ATCC BAA-731 / CDC346-86 / RSK2980)).